The chain runs to 98 residues: MPYIYTNLFLAFLTSLLGMLIYRSHLMSSLLCLEGMMLSMFIMTSLTILNLHFTLSNMIPIILLVFAACEAAVGLALLVMVSNTYGLDYVQNLNLLQC.

3 helical membrane passes run methionine 1–isoleucine 21, serine 29–leucine 49, and isoleucine 61–valine 81.

Belongs to the complex I subunit 4L family. Core subunit of respiratory chain NADH dehydrogenase (Complex I) which is composed of 45 different subunits.

The protein resides in the mitochondrion inner membrane. The catalysed reaction is a ubiquinone + NADH + 5 H(+)(in) = a ubiquinol + NAD(+) + 4 H(+)(out). Core subunit of the mitochondrial membrane respiratory chain NADH dehydrogenase (Complex I) which catalyzes electron transfer from NADH through the respiratory chain, using ubiquinone as an electron acceptor. Part of the enzyme membrane arm which is embedded in the lipid bilayer and involved in proton translocation. This is NADH-ubiquinone oxidoreductase chain 4L (MT-ND4L) from Cephalopachus bancanus (Western tarsier).